The chain runs to 313 residues: Peptidyl-prolyl cis-trans isomerase 9 (313 aa).

Positions 9–174 constitute a PPIase cyclophilin-type domain; the sequence is FLDMALDEKP…AKVRIFNSGE (166 aa). Composition is skewed to basic and acidic residues over residues 216-230 and 253-269; these read EERE…ESSR and RGDR…KDDF. Disordered stretches follow at residues 216-274 and 288-313; these read EERE…IAVR and TPEH…DLQP.

The protein belongs to the cyclophilin-type PPIase family.

It carries out the reaction [protein]-peptidylproline (omega=180) = [protein]-peptidylproline (omega=0). In terms of biological role, PPIases accelerate the folding of proteins. It catalyzes the cis-trans isomerization of proline imid ic peptide bonds in oligopeptides. Thought to function as a catalyst in the folding and modification of cuticle collagens. This chain is Peptidyl-prolyl cis-trans isomerase 9, found in Caenorhabditis briggsae.